We begin with the raw amino-acid sequence, 136 residues long: Large ribosomal subunit protein uL16 (136 aa).

This sequence belongs to the universal ribosomal protein uL16 family. In terms of assembly, part of the 50S ribosomal subunit.

Its function is as follows. Binds 23S rRNA and is also seen to make contacts with the A and possibly P site tRNAs. The sequence is that of Large ribosomal subunit protein uL16 from Aliivibrio fischeri (strain ATCC 700601 / ES114) (Vibrio fischeri).